A 64-amino-acid polypeptide reads, in one-letter code: uncharacterized protein (64 aa).

This is an uncharacterized protein from Dictyostelium discoideum (Social amoeba).